The sequence spans 343 residues: Aspartate carbamoyltransferase catalytic subunit (343 aa).

The carbamoyl phosphate site is built by arginine 91 and threonine 92. Lysine 119 is a binding site for L-aspartate. Carbamoyl phosphate-binding residues include arginine 141, histidine 171, and glutamine 174. The L-aspartate site is built by arginine 204 and arginine 259. 2 residues coordinate carbamoyl phosphate: glycine 300 and proline 301.

This sequence belongs to the aspartate/ornithine carbamoyltransferase superfamily. ATCase family. As to quaternary structure, heterododecamer (2C3:3R2) of six catalytic PyrB chains organized as two trimers (C3), and six regulatory PyrI chains organized as three dimers (R2).

The catalysed reaction is carbamoyl phosphate + L-aspartate = N-carbamoyl-L-aspartate + phosphate + H(+). It participates in pyrimidine metabolism; UMP biosynthesis via de novo pathway; (S)-dihydroorotate from bicarbonate: step 2/3. Functionally, catalyzes the condensation of carbamoyl phosphate and aspartate to form carbamoyl aspartate and inorganic phosphate, the committed step in the de novo pyrimidine nucleotide biosynthesis pathway. The protein is Aspartate carbamoyltransferase catalytic subunit of Burkholderia ambifaria (strain MC40-6).